The chain runs to 3859 residues: Transformation/transcription domain-associated protein (3859 aa).

A2 carries the post-translational modification N-acetylalanine. Residues 491-526 (PAAPGPAPSPAPVPAPPPPPPPPPPATPVTPAPVPP) show a composition bias toward pro residues. The segment at 491–541 (PAAPGPAPSPAPVPAPPPPPPPPPPATPVTPAPVPPFEKQGEKDKEDKQTF) is disordered. The span at 529 to 539 (KQGEKDKEDKQ) shows a compositional bias: basic and acidic residues. At S1628 the chain carries Phosphoserine. An interaction with TP53 region spans residues 2010-2388 (SEVVIKWELQ…SPMAANQTPT (379 aa)). Residues 2023-2044 (DQQPDSDMDPNSSGEGVNSVSS) form a disordered region. A compositionally biased stretch (low complexity) spans 2033–2044 (NSSGEGVNSVSS). Positions 2047–2062 (KRGLSVDSAQEVKRFR) match the Bipartite nuclear localization signal motif. Phosphoserine occurs at positions 2051 and 2077. Residue K2543 forms a Glycyl lysine isopeptide (Lys-Gly) (interchain with G-Cter in SUMO2) linkage. Residues 2543 to 2554 (KQEPRERENSES) show a composition bias toward basic and acidic residues. Positions 2543–2578 (KQEPRERENSESKEEDVEIDIELAPGDQTSTPKTKE) are disordered. Residues 2692–3275 (VLKYLGKTHN…YFPIRTLYLT (584 aa)) enclose the FAT domain. At K3078 the chain carries N6-acetyllysine. Residues 3500-3823 (MPRVEIVQKH…AVTAIMTRLH (324 aa)) enclose the PI3K/PI4K catalytic domain. The G-loop stretch occupies residues 3506-3512 (VQKHNTA). Residues 3687–3695 (HLNRLNPEM) form a catalytic loop region. Residues 3707–3732 (VAYFRFDINDATGDLDANRPVPFRLT) are activation loop. Residues 3827–3859 (QFEGGESKVNTLVAAANSLDNLCRMDPAWHPWL) enclose the FATC domain.

It belongs to the PI3/PI4-kinase family. TRA1 subfamily. In terms of assembly, interacts with MYC, E2F1 and E2F4 transcription factors. Interacts directly with p53/TP53. Interacts with GCN5L2. Component of various HAT complexes. Component of the PCAF complex, at least composed of TADA2L/ADA2, SUPT3H, TADA3L/ADA3, TAF5L/PAF65-beta, TAF6L/PAF65-alpha, TAF10/TAFII30, TAF12/TAFII20, TAF9/TAFII31 and TRRAP. Component of the TFTC-HAT complex, at least composed of TAF5L, TAF6L, TADA3L, SUPT3H/SPT3, TAF2/TAFII150, TAF4/TAFII135, TAF5/TAFII100, GCN5L2/GCN5, TAF10 and TRRAP. Component of the NuA4 histone acetyltransferase complex which contains the catalytic subunit KAT5/TIP60 and the subunits EP400, TRRAP/PAF400, BRD8/SMAP, EPC1, DMAP1/DNMAP1, RUVBL1/TIP49, RUVBL2, ING3, actin, ACTL6A/BAF53A, MORF4L1/MRG15, MORF4L2/MRGX, MRGBP, YEATS4/GAS41, VPS72/YL1 and MEAF6. Component of the STAGA complex, at least composed of SUPT3H, GCN5L2, SUPT7L, TAF5L, TAF6L, TADA3L, TAD1L, TAF10, TAF12, TRRAP and TAF9. The STAGA core complex is associated with a subcomplex required for histone deubiquitination composed of ATXN7L3, ENY2 and USP22. Component of the BAF53 complex, at least composed of BAF53A, RUVBL1, SMARCA4/BRG1, and TRRAP, which preferentially acetylates histone H4 (and H2A) within nucleosomes. Interacts with NPAT. Interaction with TELO2 and TTI1. Component of a SWR1-like complex.

It localises to the nucleus. Adapter protein, which is found in various multiprotein chromatin complexes with histone acetyltransferase activity (HAT), which gives a specific tag for epigenetic transcription activation. Component of the NuA4 histone acetyltransferase complex which is responsible for acetylation of nucleosomal histones H4 and H2A. Plays a central role in MYC transcription activation, and also participates in cell transformation by MYC. Required for p53/TP53-, E2F1- and E2F4-mediated transcription activation. Also involved in transcription activation mediated by the adenovirus E1A, a viral oncoprotein that deregulates transcription of key genes. Probably acts by linking transcription factors such as E1A, MYC or E2F1 to HAT complexes such as STAGA thereby allowing transcription activation. Probably not required in the steps following histone acetylation in processes of transcription activation. May be required for the mitotic checkpoint and normal cell cycle progression. Component of a SWR1-like complex that specifically mediates the removal of histone H2A.Z/H2AZ1 from the nucleosome. May play a role in the formation and maintenance of the auditory system. In Homo sapiens (Human), this protein is Transformation/transcription domain-associated protein (TRRAP).